A 377-amino-acid chain; its full sequence is Guanine nucleotide-binding protein subunit alpha-13 (377 aa).

2 S-palmitoyl cysteine lipidation sites follow: Cys14 and Cys18. The 331-residue stretch at 47–377 folds into the G-alpha domain; that stretch reads RLVKILLLGA…HDNLKQLMLQ (331 aa). Residues 50–63 form a G1 motif region; it reads KILLLGAGESGKST. GTP contacts are provided by residues 58-63, Ser173, and 197-200; these read ESGKST and LLAR. Ser62 lines the Mg(2+) pocket. The interval 195-203 is G2 motif; that stretch reads DILLARRPT. Thr203 contacts Mg(2+). At Thr203 the chain carries Phosphothreonine. Residues 218-227 are G3 motif; it reads FKMVDVGGQR. Residues 287–294 are G4 motif; sequence ILFLNKTD. GTP-binding positions include 291 to 294 and Ala349; that span reads NKTD. Residues 347–352 are G5 motif; that stretch reads TTAINT.

It belongs to the G-alpha family. G(12) subfamily. G proteins are composed of 3 units; alpha, beta and gamma. The alpha chain contains the guanine nucleotide binding site. Interacts with UBXD5. Interacts with HAX1. Interacts (in GTP-bound form) with PPP5C (via TPR repeats); activates PPP5C phosphatase activity and translocates PPP5C to the cell membrane. Interacts with RGS22. Interacts (in GTP-bound form) with ARHGEF1. Interacts (in GTP-bound form) with ARHGEF11 (via RGS domain). Interacts (in GTP-bound form) with ARHGEF12 (via RGS domain). Interacts with CTNND1. Interacts with GAS2L2. Interacts with GPR35. Interacts with GPR174. Post-translationally, phosphorylation on Thr-203 destabilizes the heterotrimer of alpha, beta and gamma, and inhibits Rho activation. In terms of tissue distribution, expressed in brain and testis, as well as in kidney and sperm (at protein level).

It is found in the membrane. The protein resides in the melanosome. It localises to the cytoplasm. Its subcellular location is the nucleus. In terms of biological role, guanine nucleotide-binding proteins (G proteins) are involved as modulators or transducers in various transmembrane signaling systems. Activates effector molecule RhoA by binding and activating RhoGEFs (ARHGEF1/p115RhoGEF, ARHGEF11/PDZ-RhoGEF and ARHGEF12/LARG). GNA13-dependent Rho signaling subsequently regulates transcription factor AP-1 (activating protein-1). Promotes tumor cell invasion and metastasis by activating Rho/ROCK signaling pathway. Inhibits CDH1-mediated cell adhesion in a process independent from Rho activation. In lymphoid follicles, transmits P2RY8- and S1PR2-dependent signals that lead to inhibition of germinal center (GC) B cell growth and migration outside the GC niche. The protein is Guanine nucleotide-binding protein subunit alpha-13 (Gna13) of Mus musculus (Mouse).